A 793-amino-acid chain; its full sequence is Alanine--tRNA ligase, mitochondrial (793 aa).

ATP contacts are provided by residues arginine 88, tryptophan 187, and isoleucine 224–asparagine 226. Residues asparagine 226 and aspartate 249 each contribute to the L-alanine site. Position 253 (glycine 253) interacts with ATP. Zn(2+) is bound by residues histidine 594, histidine 598, cysteine 706, and histidine 710.

This sequence belongs to the class-II aminoacyl-tRNA synthetase family. As to quaternary structure, monomer. Zn(2+) serves as cofactor.

It localises to the mitochondrion. It catalyses the reaction tRNA(Ala) + L-alanine + ATP = L-alanyl-tRNA(Ala) + AMP + diphosphate. Catalyzes the attachment of alanine to tRNA(Ala) in a two-step reaction: alanine is first activated by ATP to form Ala-AMP and then transferred to the acceptor end of tRNA(Ala). Also edits incorrectly charged tRNA(Ala) via its editing domain. The sequence is that of Alanine--tRNA ligase, mitochondrial from Caenorhabditis elegans.